Reading from the N-terminus, the 181-residue chain is Mitochondrial inner membrane protein Mpv17 (181 aa).

Transmembrane regions (helical) follow at residues 20–38 (VIVS…QYLT), 48–70 (TARF…FRVL), 91–113 (FMFS…GFSF), and 140–162 (LINF…AFFW).

This sequence belongs to the peroxisomal membrane protein PXMP2/4 family.

The protein resides in the mitochondrion inner membrane. Functionally, involved in mitochondria homeostasis. The protein is Mitochondrial inner membrane protein Mpv17 of Caenorhabditis briggsae.